A 391-amino-acid chain; its full sequence is Succinate--CoA ligase [ADP-forming] subunit beta (391 aa).

The region spanning 9-246 is the ATP-grasp domain; the sequence is KHLFADYDIP…ITQEDEAEVQ (238 aa). ATP-binding positions include Lys-46, 53 to 55, Glu-99, Leu-102, and Glu-107; that span reads GRG. 2 residues coordinate Mg(2+): Asn-199 and Asp-213. Residues Asn-266 and 323 to 325 each bind substrate; that span reads GIV.

This sequence belongs to the succinate/malate CoA ligase beta subunit family. As to quaternary structure, heterotetramer of two alpha and two beta subunits. Requires Mg(2+) as cofactor.

It carries out the reaction succinate + ATP + CoA = succinyl-CoA + ADP + phosphate. The catalysed reaction is GTP + succinate + CoA = succinyl-CoA + GDP + phosphate. The protein operates within carbohydrate metabolism; tricarboxylic acid cycle; succinate from succinyl-CoA (ligase route): step 1/1. Its function is as follows. Succinyl-CoA synthetase functions in the citric acid cycle (TCA), coupling the hydrolysis of succinyl-CoA to the synthesis of either ATP or GTP and thus represents the only step of substrate-level phosphorylation in the TCA. The beta subunit provides nucleotide specificity of the enzyme and binds the substrate succinate, while the binding sites for coenzyme A and phosphate are found in the alpha subunit. The protein is Succinate--CoA ligase [ADP-forming] subunit beta of Alkalilimnicola ehrlichii (strain ATCC BAA-1101 / DSM 17681 / MLHE-1).